The chain runs to 269 residues: tRNA pseudouridine synthase A (269 aa).

The active-site Nucleophile is aspartate 51. Tyrosine 109 serves as a coordination point for substrate.

It belongs to the tRNA pseudouridine synthase TruA family. In terms of assembly, homodimer.

It carries out the reaction uridine(38/39/40) in tRNA = pseudouridine(38/39/40) in tRNA. Functionally, formation of pseudouridine at positions 38, 39 and 40 in the anticodon stem and loop of transfer RNAs. The protein is tRNA pseudouridine synthase A of Aeromonas hydrophila subsp. hydrophila (strain ATCC 7966 / DSM 30187 / BCRC 13018 / CCUG 14551 / JCM 1027 / KCTC 2358 / NCIMB 9240 / NCTC 8049).